We begin with the raw amino-acid sequence, 287 residues long: Nucleotide-binding protein TGRD_433 (287 aa).

9-16 is a binding site for ATP; the sequence is GMSGAGKS. 60 to 63 serves as a coordination point for GTP; that stretch reads DSRA.

Belongs to the RapZ-like family.

Its function is as follows. Displays ATPase and GTPase activities. The protein is Nucleotide-binding protein TGRD_433 of Endomicrobium trichonymphae.